Here is a 389-residue protein sequence, read N- to C-terminus: Succinate--CoA ligase [ADP-forming] subunit beta (389 aa).

Positions 9-236 (KELFASHGVP…KDAEDPLEAK (228 aa)) constitute an ATP-grasp domain. Residues Lys-45, 52-54 (GRG), Ser-94, and Glu-99 contribute to the ATP site. Asn-191 and Asp-205 together coordinate Mg(2+). Substrate contacts are provided by residues Asn-256 and 318 to 320 (GIT).

This sequence belongs to the succinate/malate CoA ligase beta subunit family. As to quaternary structure, heterotetramer of two alpha and two beta subunits. The cofactor is Mg(2+).

The catalysed reaction is succinate + ATP + CoA = succinyl-CoA + ADP + phosphate. The enzyme catalyses GTP + succinate + CoA = succinyl-CoA + GDP + phosphate. It participates in carbohydrate metabolism; tricarboxylic acid cycle; succinate from succinyl-CoA (ligase route): step 1/1. Succinyl-CoA synthetase functions in the citric acid cycle (TCA), coupling the hydrolysis of succinyl-CoA to the synthesis of either ATP or GTP and thus represents the only step of substrate-level phosphorylation in the TCA. The beta subunit provides nucleotide specificity of the enzyme and binds the substrate succinate, while the binding sites for coenzyme A and phosphate are found in the alpha subunit. In Saccharopolyspora erythraea (strain ATCC 11635 / DSM 40517 / JCM 4748 / NBRC 13426 / NCIMB 8594 / NRRL 2338), this protein is Succinate--CoA ligase [ADP-forming] subunit beta.